The sequence spans 199 residues: Peroxiredoxin-1 (199 aa).

The residue at position 2 (serine 2) is an N-acetylserine. Positions alanine 6–phenylalanine 165 constitute a Thioredoxin domain. The residue at position 7 (lysine 7) is an N6-acetyllysine; alternate. A Glycyl lysine isopeptide (Lys-Gly) (interchain with G-Cter in SUMO2); alternate cross-link involves residue lysine 7. Residues lysine 16 and lysine 27 each carry the N6-acetyllysine modification. Position 32 is a phosphoserine (serine 32). The residue at position 35 (lysine 35) is an N6-acetyllysine; alternate. Residue lysine 35 is modified to N6-succinyllysine; alternate. Cysteine 52 serves as the catalytic Cysteine sulfenic acid (-SOH) intermediate. Residue threonine 90 is modified to Phosphothreonine. Lysine 120 participates in a covalent cross-link: Glycyl lysine isopeptide (Lys-Gly) (interchain with G-Cter in SUMO2). An N6-acetyllysine modification is found at lysine 136. Residue lysine 185 forms a Glycyl lysine isopeptide (Lys-Gly) (interchain with G-Cter in SUMO1) linkage. An N6-acetyllysine modification is found at lysine 197.

The protein belongs to the peroxiredoxin family. AhpC/Prx1 subfamily. Homodimer; disulfide-linked, upon oxidation. 5 homodimers assemble to form a ring-like decamer. Interacts with GDPD5; forms a mixed-disulfide with GDPD5. Interacts with SESN1 and SESN2. Interacts with FAM107A. Post-translationally, phosphorylated on Thr-90 during the M-phase, which leads to a decrease in enzymatic activity. In terms of processing, acetylation increases reducing activity and resistance to superoxidation. Deacetylated by HDAC6 which decreases reducing activity. Found in various tissues; high concentration in liver.

The protein resides in the cytoplasm. The catalysed reaction is a hydroperoxide + [thioredoxin]-dithiol = an alcohol + [thioredoxin]-disulfide + H2O. In terms of biological role, thiol-specific peroxidase that catalyzes the reduction of hydrogen peroxide and organic hydroperoxides to water and alcohols, respectively. Plays a role in cell protection against oxidative stress by detoxifying peroxides and as sensor of hydrogen peroxide-mediated signaling events. Might participate in the signaling cascades of growth factors and tumor necrosis factor-alpha by regulating the intracellular concentrations of H(2)O(2). Reduces an intramolecular disulfide bond in GDPD5 that gates the ability to GDPD5 to drive postmitotic motor neuron differentiation. The protein is Peroxiredoxin-1 (Prdx1) of Mus musculus (Mouse).